Here is a 307-residue protein sequence, read N- to C-terminus: MAPYSVVASVLAAAPPQQSGSVRQLPSTINRAITQRSQSRHVASASSASSPTTMLEERDNLWEIGGPYWWPFSSFTPPAHLDGSLPGDRGFDPFSLGTSWGQPPVDVSDPNYDESRLRWLLEGELYNGRLAMLAVVGVLTVEAQGKGPWWEIPGNLNLFGTPYVVAVVGGHLAFALLEKKRLENFRETGEAGHFGAARFDPLDLTEANPLGTDYNRQAEVRNCRLAMLTFLGFSVQAWVTGKGPIENAKDHLASPFEANIFTYGDRGTNVVAIFSAFAAVMHIAELAREKKAEDKPRSRNRTLSGSS.

The N-terminal 44 residues, 1 to 44, are a transit peptide targeting the chloroplast; the sequence is MAPYSVVASVLAAAPPQQSGSVRQLPSTINRAITQRSQSRHVAS. A disordered region spans residues 34–54; that stretch reads TQRSQSRHVASASSASSPTTM. Chlorophyll a-binding residues include T52, E63, I64, G65, Y68, L81, P86, R89, G90, F91, and D92. L96 provides a ligand contact to loroxanthin. Residues 111-143 form a helical membrane-spanning segment; it reads NYDESRLRWLLEGELYNGRLAMLAVVGVLTVEA. Positions 120, 124, 127, 132, and 146 each coordinate chlorophyll a. Residue W149 participates in loroxanthin binding. 8 residues coordinate chlorophyll a: E151, Y163, H171, E178, R181, E190, R198, and D200. Residues 161-186 form a helical membrane-spanning segment; it reads TPYVVAVVGGHLAFALLEKKRLENFR. All-trans-violaxanthin-binding residues include D200 and L202. Chlorophyll a is bound by residues L204, N208, Y214, N215, A218, N222, and R224. A helical transmembrane segment spans residues 213-238; the sequence is DYNRQAEVRNCRLAMLTFLGFSVQAW. A loroxanthin-binding site is contributed by F230. F233 contacts all-trans-violaxanthin. Chlorophyll a is bound at residue Q236. All-trans-violaxanthin is bound at residue P244. The chlorophyll a site is built by N247, H251, P255, F256, A258, N259, I260, and F274. A helical membrane pass occupies residues 265 to 289; it reads DRGTNVVAIFSAFAAVMHIAELARE.

The protein belongs to the light-harvesting chlorophyll a/b-binding (LHC) protein family. As to quaternary structure, homooligomer. Component of a light-harvesting complex (LHC) consisting of 11 chlorophyll a-b binding proteins. It depends on Binds 11 chlorophylls (Chl-a and Chl-b) and the 2 carotenoids violaxanthin and loroxanthin. as a cofactor.

Its subcellular location is the plastid. It is found in the chloroplast thylakoid membrane. Its function is as follows. Component of a light-harvesting complex (LHC). The LHC functions as a light receptor, it captures and delivers excitation energy to photosystems with which it is closely associated. Functions in a far-red LHC by absorbing far-red light and promoting photosystem II (PSII) excitation, likely with entropy-driven uphill excitation energy transfer. Exhibits a typical absorption band at 671 nm (Qy band), as well as a large far-red absorption band at 706.5 together with fluorescence emission at around 713 nm (F713). In Prasiola crispa (Green alga), this protein is Chlorophyll a-b binding protein 1, chloroplastic.